Consider the following 391-residue polypeptide: Pectate lyase D (391 aa).

Positions 1 to 31 (MNNTRVSFRSTKSLLAAIIATSMMTWSVNRA) are cleaved as a signal peptide. Ca(2+) contacts are provided by Asp170 and Asp213. The active site involves Arg266.

It belongs to the polysaccharide lyase 1 family. PLBC subfamily. Ca(2+) is required as a cofactor.

It is found in the secreted. It catalyses the reaction Eliminative cleavage of (1-&gt;4)-alpha-D-galacturonan to give oligosaccharides with 4-deoxy-alpha-D-galact-4-enuronosyl groups at their non-reducing ends.. It participates in glycan metabolism; pectin degradation; 2-dehydro-3-deoxy-D-gluconate from pectin: step 2/5. Functionally, involved in maceration and soft-rotting of plant tissue. This Dickeya chrysanthemi (Pectobacterium chrysanthemi) protein is Pectate lyase D (pelD).